Consider the following 231-residue polypeptide: 2,3,4,5-tetrahydropyridine-2,6-dicarboxylate N-acetyltransferase (231 aa).

It belongs to the transferase hexapeptide repeat family. DapH subfamily.

The enzyme catalyses (S)-2,3,4,5-tetrahydrodipicolinate + acetyl-CoA + H2O = L-2-acetamido-6-oxoheptanedioate + CoA. It functions in the pathway amino-acid biosynthesis; L-lysine biosynthesis via DAP pathway; LL-2,6-diaminopimelate from (S)-tetrahydrodipicolinate (acetylase route): step 1/3. In terms of biological role, catalyzes the transfer of an acetyl group from acetyl-CoA to tetrahydrodipicolinate. This Thermosipho melanesiensis (strain DSM 12029 / CIP 104789 / BI429) protein is 2,3,4,5-tetrahydropyridine-2,6-dicarboxylate N-acetyltransferase.